The following is a 475-amino-acid chain: Na(+)/H(+) antiporter NhaA 2 (475 aa).

12 helical membrane-spanning segments follow: residues 44–64 (AQAT…WWAN), 92–112 (LKHI…GLEI), 130–150 (LILC…LFNW), 156–176 (IGWG…LTLV), 186–206 (AFLV…IALF), 211–231 (ISVI…IANY), 232–252 (AGVL…WTML), 255–275 (GVHP…RPML), 331–351 (ALDL…NAGV), 368–388 (LGIV…ACWL), 406–426 (VIGM…IATL), and 442–462 (ILFA…IIAA).

Belongs to the NhaA Na(+)/H(+) (TC 2.A.33) antiporter family.

It localises to the cell inner membrane. It carries out the reaction Na(+)(in) + 2 H(+)(out) = Na(+)(out) + 2 H(+)(in). In terms of biological role, na(+)/H(+) antiporter that extrudes sodium in exchange for external protons. The protein is Na(+)/H(+) antiporter NhaA 2 of Psychromonas ingrahamii (strain DSM 17664 / CCUG 51855 / 37).